A 644-amino-acid polypeptide reads, in one-letter code: MFQDNPLLAQLKQQLHTQTPRVEGVVKGTEKGFGFLEVDGQKSYFIPPPQMKKVMHGDRIIATLHTDKDREIAEPETLVEPFLSRFVGRVQRKDDRLSIVPDHPLLRDAIQCRPVRELTHSFQNGDWVVAEMCRHPLKGDRAFQADLTAFITNGEDHFVPWWVTLARHNLEREAPAMVESALNDAELEREDLTALNFVTIDSASTEDMDDALFVQDNGDGSWLLTIAIADPTAYVVENSELDLTARKRAFTNYLPGFNIPMLPRDLSDNLCSLRPNERRPVLVCRVTITEEGTLSNDIRFSAAWVESKAKLVYDDVSDWLEGNNRWQPQDTAIAEQITLLKRICDARSNWRQQHALVFKDRPDYRFLLGEKGEVLDIIVEHRRIANRIVEECMIAANVCAALALREHLGFGIYNVHTGFDPALVEQAASVLKANGVDADPQALLTLPGFCELRRHLDALPTQFLDSRIRRFQTFAEISTVPGPHFGLGLEAYATWTSPIRKYGDMVNHRLLKAMITGQQAEKPQEEITVQLAERRRLNRMAERDVGDWLYARYLQPQAGTDTRFTAEIIDITRGGLRVRLLDNGAVAFIPAPFIHAVRDEVVCSQETGTVQIKGETVYSQSDKIEVRIAEVRMETRNVIARPVA.

The 328-residue stretch at 189-516 folds into the RNB domain; that stretch reads REDLTALNFV…NHRLLKAMIT (328 aa). The region spanning 561 to 643 is the S1 motif domain; the sequence is DTRFTAEIID…ETRNVIARPV (83 aa).

Belongs to the RNR ribonuclease family. RNase II subfamily.

It is found in the cytoplasm. The enzyme catalyses Exonucleolytic cleavage in the 3'- to 5'-direction to yield nucleoside 5'-phosphates.. Functionally, involved in mRNA degradation. Hydrolyzes single-stranded polyribonucleotides processively in the 3' to 5' direction. The sequence is that of Exoribonuclease 2 from Yersinia pseudotuberculosis serotype IB (strain PB1/+).